Reading from the N-terminus, the 191-residue chain is Peptidyl-tRNA hydrolase (191 aa).

Residue Tyr-16 participates in tRNA binding. The active-site Proton acceptor is the His-21. Positions 66, 68, and 114 each coordinate tRNA.

Belongs to the PTH family. In terms of assembly, monomer.

Its subcellular location is the cytoplasm. It catalyses the reaction an N-acyl-L-alpha-aminoacyl-tRNA + H2O = an N-acyl-L-amino acid + a tRNA + H(+). In terms of biological role, hydrolyzes ribosome-free peptidyl-tRNAs (with 1 or more amino acids incorporated), which drop off the ribosome during protein synthesis, or as a result of ribosome stalling. Catalyzes the release of premature peptidyl moieties from peptidyl-tRNA molecules trapped in stalled 50S ribosomal subunits, and thus maintains levels of free tRNAs and 50S ribosomes. This Geotalea uraniireducens (strain Rf4) (Geobacter uraniireducens) protein is Peptidyl-tRNA hydrolase.